Here is a 589-residue protein sequence, read N- to C-terminus: UvrABC system protein C (589 aa).

The GIY-YIG domain occupies 14–91; it reads HKPGCYLWKD…IAKYKPKYNM (78 aa).

The protein belongs to the UvrC family. In terms of assembly, interacts with UvrB in an incision complex.

Its subcellular location is the cytoplasm. Functionally, the UvrABC repair system catalyzes the recognition and processing of DNA lesions. UvrC both incises the 5' and 3' sides of the lesion. The N-terminal half is responsible for the 3' incision and the C-terminal half is responsible for the 5' incision. The protein is UvrABC system protein C of Malacoplasma penetrans (strain HF-2) (Mycoplasma penetrans).